We begin with the raw amino-acid sequence, 492 residues long: MANYFNTLNLRQKLDQLGRCRFMDREEFADEANFLKGKKIVIVGCGAQGLNQGLNMRDSGLDISYALRPEAIAEKRASFQRATENGFKVGTYEELIPTADLVVNLTPDKQHSKVVADVMPLMKKDSAFGYSHGFNIVEVGEEIRKDITVVMVAPKCPGTEVREEYKRGFGVPTLIAVHPENDPKGEGLAIAKAWAAATGGHKAGVLESSFVAEVKSDLMGEQTILCGMLQAGSIVCYDKLVADGKDPAYAGKLIQYGWETITEALKQGGITLMMDRLSNSAKLRAFELAEQIKKSLGFLYYKHMDDIVSGHFSATMMADWENDDKDLFAWREATGKTAFENAPKYDGKISEQEYFDNGVLMIAMVKAGVELAFDAMVASGIYEESAYYESLHELPLIANTIARKRLYEMNVVISDTAEYGNYLFSNVATPILAKEIIPNLQKGDLGEPTPAVEVDNITLRAVNDAIRNHPVELIGQELRGYMTDMKRIAVAG.

Residues 14 to 208 form the KARI N-terminal Rossmann domain; it reads LDQLGRCRFM…GGHKAGVLES (195 aa). Residues 45–48, R68, R76, S78, and 108–110 contribute to the NADP(+) site; these read CGAQ and DKQ. H132 is a catalytic residue. G158 serves as a coordination point for NADP(+). KARI C-terminal knotted domains are found at residues 209-344 and 345-485; these read SFVA…NAPK and YDGK…MTDM. Mg(2+)-binding residues include D217, E221, E389, and E393. S414 contributes to the substrate binding site.

Belongs to the ketol-acid reductoisomerase family. Mg(2+) serves as cofactor.

The enzyme catalyses (2R)-2,3-dihydroxy-3-methylbutanoate + NADP(+) = (2S)-2-acetolactate + NADPH + H(+). It carries out the reaction (2R,3R)-2,3-dihydroxy-3-methylpentanoate + NADP(+) = (S)-2-ethyl-2-hydroxy-3-oxobutanoate + NADPH + H(+). Its pathway is amino-acid biosynthesis; L-isoleucine biosynthesis; L-isoleucine from 2-oxobutanoate: step 2/4. It participates in amino-acid biosynthesis; L-valine biosynthesis; L-valine from pyruvate: step 2/4. Functionally, involved in the biosynthesis of branched-chain amino acids (BCAA). Catalyzes an alkyl-migration followed by a ketol-acid reduction of (S)-2-acetolactate (S2AL) to yield (R)-2,3-dihydroxy-isovalerate. In the isomerase reaction, S2AL is rearranged via a Mg-dependent methyl migration to produce 3-hydroxy-3-methyl-2-ketobutyrate (HMKB). In the reductase reaction, this 2-ketoacid undergoes a metal-dependent reduction by NADPH to yield (R)-2,3-dihydroxy-isovalerate. The protein is Ketol-acid reductoisomerase (NADP(+)) of Haemophilus influenzae (strain PittGG).